The following is a 260-amino-acid chain: Cytosolic Fe-S cluster assembly factor Nubp2 homolog (260 aa).

Residue 14–21 (GKGGVGKS) coordinates ATP. Residues C188 and C191 each contribute to the [4Fe-4S] cluster site.

Belongs to the Mrp/NBP35 ATP-binding proteins family. NUBP2/CFD1 subfamily. In terms of assembly, heterotetramer of 2 Nubp1 and 2 Nubp2 chains. The cofactor is [4Fe-4S] cluster.

The protein localises to the cytoplasm. In terms of biological role, component of the cytosolic iron-sulfur (Fe/S) protein assembly (CIA) machinery. Required for maturation of extramitochondrial Fe-S proteins. The Nubp1-Nubp2 heterotetramer forms a Fe-S scaffold complex, mediating the de novo assembly of an Fe-S cluster and its transfer to target apoproteins. The sequence is that of Cytosolic Fe-S cluster assembly factor Nubp2 homolog from Drosophila simulans (Fruit fly).